The chain runs to 1191 residues: Probable inositol polyphosphate 5-phosphatase C9G1.10c (1191 aa).

5 stretches are compositionally biased toward polar residues: residues 1-10 (MASRQGFSNV), 72-101 (QVSSTIGSSTGRKVSGSIQRLASNFKNPSN), 114-135 (SDSSESHVATPSSPTISNSFVS), 151-161 (SFQSSVQSTKG), and 181-193 (NFSSKAGSSSPIS). Positions 1–193 (MASRQGFSNV…SKAGSSSPIS (193 aa)) are disordered. S195 carries the phosphoserine modification. Disordered stretches follow at residues 205-281 (SQSP…PQPV), 294-334 (SQQL…DASL), and 355-425 (IPEK…SSSS). Pro residues predominate over residues 268 to 280 (TPPPIPSPRPPQP). A compositionally biased stretch (basic residues) spans 302-311 (SPRKPPKPPL). 3 stretches are compositionally biased toward polar residues: residues 316-334 (TQRSSSPIENLATKSDASL), 367-382 (HTLSELSSPALTSENL), and 400-413 (LATNKPVSMPVSTE). The segment covering 414-425 (QSDPSVAASSSS) has biased composition (low complexity).

Belongs to the inositol 1,4,5-trisphosphate 5-phosphatase family.

The protein resides in the cytoplasm. The protein is Probable inositol polyphosphate 5-phosphatase C9G1.10c of Schizosaccharomyces pombe (strain 972 / ATCC 24843) (Fission yeast).